The sequence spans 412 residues: UPF0761 membrane protein LPC_2650 (412 aa).

The next 6 helical transmembrane spans lie at 36–56 (ALAF…LAIF), 99–119 (LSIW…FTIE), 137–157 (AFLL…LSLA), 177–197 (ILHY…YVVV), 210–230 (GGLV…YYLI), and 241–261 (AFAT…ITLL).

The protein belongs to the UPF0761 family.

It is found in the cell inner membrane. The sequence is that of UPF0761 membrane protein LPC_2650 from Legionella pneumophila (strain Corby).